The following is a 217-amino-acid chain: U exon protein (217 aa).

Disordered stretches follow at residues 79-113 and 171-217; these read ISGEGNGQSGRGAARNHPRARTRCGATSPNHGGRV and KEAP…WQRR. Positions 188-197 are enriched in basic residues; the sequence is RGQRGRKRRC. Over residues 202-217 the composition is skewed to polar residues; the sequence is GGFQQPTGANQAWQRR.

Belongs to the adenoviridae U exon protein family.

Its subcellular location is the host nucleus. It is found in the host nucleoplasm. The protein resides in the host nucleolus. Its function is as follows. Might play a role in viral replication since it is associated with viral replication centers. Seems to have an effect on DBP localization. In Human adenovirus C serotype 5 (HAdV-5), this protein is U exon protein.